A 258-amino-acid polypeptide reads, in one-letter code: Sugar fermentation stimulation protein homolog (258 aa).

Belongs to the SfsA family.

The chain is Sugar fermentation stimulation protein homolog from Marinomonas sp. (strain MWYL1).